Reading from the N-terminus, the 137-residue chain is Large ribosomal subunit protein uL16 (137 aa).

This sequence belongs to the universal ribosomal protein uL16 family. As to quaternary structure, part of the 50S ribosomal subunit.

Functionally, binds 23S rRNA and is also seen to make contacts with the A and possibly P site tRNAs. The chain is Large ribosomal subunit protein uL16 from Streptococcus agalactiae serotype Ia (strain ATCC 27591 / A909 / CDC SS700).